A 1961-amino-acid polypeptide reads, in one-letter code: Myosin-9 (1961 aa).

A2 is subject to N-acetylalanine. The interval 2-838 is mediates interaction with LIMCH1; the sequence is AQQAADKYLY…RLFTKVKPLL (837 aa). K8 carries the N6-acetyllysine modification. Position 11 is a phosphotyrosine (Y11). The 51-residue stretch at 27 to 77 folds into the Myosin N-terminal SH3-like domain; that stretch reads GAKKLVWVPSTKNGFEPASLKEEVGEEAIVELVENGKKVKVNKDDIQKMNP. One can recognise a Myosin motor domain in the interval 81–776; sequence SKVEDMAELT…VLAHLEEERD (696 aa). K102 bears the N6-acetyllysine mark. 174–181 contacts ATP; the sequence is GESGAGKT. An N6-acetyllysine mark is found at K299, K435, and K613. Position 628 is a phosphoserine (S628). An actin-binding region spans residues 654-676; that stretch reads LAKLMATLRNTNPNFVCCIIPNH. Phosphotyrosine is present on Y754. The 30-residue stretch at 779–808 folds into the IQ domain; sequence ITDVIIGFQACCRGYLARKAFAKRQQQLTA. Residues 841–1927 are a coiled coil; it reads IRHEDELLAK…LKNKLRRGDM (1087 aa). An N6-succinyllysine modification is found at K850. An N6-acetyllysine mark is found at K860, K975, and K1024. Residues 1035-1055 show a composition bias toward basic and acidic residues; that stretch reads RLRREEKQRQELEKTRRKLEG. The segment at 1035-1057 is disordered; that stretch reads RLRREEKQRQELEKTRRKLEGDS. S1114 bears the Phosphoserine mark. Residues K1234 and K1249 each carry the N6-acetyllysine modification. Positions 1331 to 1353 are disordered; sequence LKQMEDEKNSFREQLEEEEEEAK. Basic and acidic residues predominate over residues 1332–1344; that stretch reads KQMEDEKNSFREQ. An N6-acetyllysine mark is found at K1358, K1393, K1405, K1411, K1460, and K1639. K1670 is modified (N6-succinyllysine). S1715 carries the phosphoserine modification. 3 positions are modified to N6-acetyllysine: K1794, K1803, and K1846. The tract at residues 1878–1910 is disordered; the sequence is RQLEEAEEEAQRANASRRKLQRELEDATETADA. R1924 carries the post-translational modification Omega-N-methylarginine. Positions 1938–1961 are disordered; the sequence is KGTGDCSDEEVDGKADGADAKATE. S1944 carries the post-translational modification Phosphoserine. Residues 1949–1961 are compositionally biased toward basic and acidic residues; it reads DGKADGADAKATE.

This sequence belongs to the TRAFAC class myosin-kinesin ATPase superfamily. Myosin family. As to quaternary structure, myosin is a hexameric protein that consists of 2 heavy chain subunits (MHC), 2 alkali light chain subunits (MLC) and 2 regulatory light chain subunits (MLC-2). Interacts with RASIP1. Interacts with DDR1. Interacts with PDLIM2. Interacts with SVIL. Interacts with HTRA3. Interacts with Myo7a. Interacts with CFAP95. Interacts with LIMCH1; independently of the integration of MYH9 into the myosin complex. Interacts with RAB3A. Interacts with ZBED4. Interacts with S100A4; this interaction increases cell motility. Post-translationally, ISGylated. Ubiquitination.

It is found in the cytoplasm. It localises to the cytoskeleton. The protein resides in the cell cortex. Its subcellular location is the cytoplasmic vesicle. The protein localises to the secretory vesicle. It is found in the cortical granule. In terms of biological role, cellular myosin that appears to play a role in cytokinesis, cell shape, and specialized functions such as secretion and capping. Required for cortical actin clearance prior to oocyte exocytosis. Promotes cell motility in conjunction with S100A4. During cell spreading, plays an important role in cytoskeleton reorganization, focal contact formation (in the margins but not the central part of spreading cells), and lamellipodial retraction; this function is mechanically antagonized by MYH10. This Rattus norvegicus (Rat) protein is Myosin-9 (Myh9).